The primary structure comprises 274 residues: Rhamnulose-1-phosphate aldolase (274 aa).

E117 is an active-site residue. 3 residues coordinate Zn(2+): H141, H143, and H212.

It belongs to the aldolase class II family. RhaD subfamily. In terms of assembly, homotetramer. It depends on Zn(2+) as a cofactor.

The protein resides in the cytoplasm. The enzyme catalyses L-rhamnulose 1-phosphate = (S)-lactaldehyde + dihydroxyacetone phosphate. It functions in the pathway carbohydrate degradation; L-rhamnose degradation; glycerone phosphate from L-rhamnose: step 3/3. Functionally, catalyzes the reversible cleavage of L-rhamnulose-1-phosphate to dihydroxyacetone phosphate (DHAP) and L-lactaldehyde. In Escherichia coli (strain SE11), this protein is Rhamnulose-1-phosphate aldolase.